Here is a 231-residue protein sequence, read N- to C-terminus: MAKISKRAAANKAKVERTKFYPIDEALSLVKECASAKFDESIDVAVQLGIDAKKSDQVVRGSVVLPAGTGKSVRVAVFAQGDKAEQAKAAGAEIVGMEDLAEQIKAGKMDFDVVIASPDTMRVVGTLGQILGPRGLMPNPKVGTVTPDVATAVKNAKAGQVQFRVDKAGIIHATIGRRSFEPAALKSNLAALLDALTKAKPASSKGVYLRKVAVSSTMGVGVRVDQATLAA.

This sequence belongs to the universal ribosomal protein uL1 family. In terms of assembly, part of the 50S ribosomal subunit.

Its function is as follows. Binds directly to 23S rRNA. The L1 stalk is quite mobile in the ribosome, and is involved in E site tRNA release. In terms of biological role, protein L1 is also a translational repressor protein, it controls the translation of the L11 operon by binding to its mRNA. The sequence is that of Large ribosomal subunit protein uL1 from Ralstonia pickettii (strain 12J).